The chain runs to 642 residues: Ribosome biogenesis protein BOP1 homolog (642 aa).

A disordered region spans residues methionine 1–aspartate 28. The segment covering glutamate 10–aspartate 20 has biased composition (basic and acidic residues). WD repeat units follow at residues glycine 311–threonine 351, serine 353–arginine 393, arginine 472–lysine 510, threonine 513–lysine 552, histidine 556–lysine 595, and lysine 612–threonine 642.

Belongs to the WD repeat BOP1/ERB1 family.

It localises to the nucleus. Its subcellular location is the nucleolus. The protein resides in the nucleoplasm. Functionally, required for maturation of ribosomal RNAs and formation of the large ribosomal subunit. This chain is Ribosome biogenesis protein BOP1 homolog, found in Brugia malayi (Filarial nematode worm).